Reading from the N-terminus, the 275-residue chain is Autophagy-related protein 5 (275 aa).

A Glycyl lysine isopeptide (Lys-Gly) (interchain with G-Cter in lgg-3/ATG12) cross-link involves residue K129. Positions 221-231 (LSSSSSSSTDS) are enriched in low complexity. Residues 221-241 (LSSSSSSSTDSQSEHPPRLIS) form a disordered region.

This sequence belongs to the ATG5 family. Most likely a component of a complex at least containing atg-5, lgg-3/ATG12, atg-16.1 and/or atg-16.2. Interacts with lgg-3/ATG12. Interacts with atg-16.1 (via N-terminus) and atg-16.2 (via N-terminus). In terms of processing, conjugated to lgg-3/ATG12; which is essential for autophagy.

The protein localises to the preautophagosomal structure membrane. Involved in autophagic vesicle formation. Conjugation with lgg-3/ATG12, through a ubiquitin-like conjugating system involving atg-7 as an E1-like activating enzyme and atg-10 as an E2-like conjugating enzyme, is essential for its function. Most likely a component of an atg-5-lgg-3-atg-16 complex that promotes autophagosome formation by associating with lgg-2, but not lgg-1, at the preautophagosomal membrane. Probably, as part of an atg-5-lgg-3-atg-16 complex, required for lgg-1 lipidation; the complex acts as an E3-like enzyme promoting atg-3-mediated lgg-1 lipidation. Furthermore, association with atg-16.2 is required for the nucleation of lgg-1 positive autophagic vesicles. This Caenorhabditis elegans protein is Autophagy-related protein 5.